We begin with the raw amino-acid sequence, 259 residues long: Probable UMP-CMP kinase 2 (259 aa).

63-68 (GSGKGT) lines the ATP pocket. Residues 83–112 (SAGDLLRREIAMHTENGAMILNLIKDGKIV) form an NMP region. Residues Arg-89, 110 to 112 (KIV), and 137 to 140 (GFPR) contribute to the a ribonucleoside 5'-phosphate site. Asn-144 is a binding site for CMP. Residues 175-183 (NRNQGRIDD) form an LID region. Arg-176 contacts ATP. Arg-180 and Arg-191 together coordinate a ribonucleoside 5'-phosphate. Position 219 (Gly-219) interacts with ATP.

Belongs to the adenylate kinase family. UMP-CMP kinase subfamily. In terms of assembly, monomer. Mg(2+) serves as cofactor.

It is found in the cytoplasm. The protein resides in the nucleus. The catalysed reaction is CMP + ATP = CDP + ADP. It carries out the reaction dCMP + ATP = dCDP + ADP. It catalyses the reaction UMP + ATP = UDP + ADP. In terms of biological role, catalyzes the phosphorylation of pyrimidine nucleoside monophosphates at the expense of ATP. Plays an important role in de novo pyrimidine nucleotide biosynthesis. Has preference for UMP and CMP as phosphate acceptors. This Arabidopsis thaliana (Mouse-ear cress) protein is Probable UMP-CMP kinase 2 (UMK2).